Consider the following 105-residue polypeptide: Small ribosomal subunit protein uS10 (105 aa).

This sequence belongs to the universal ribosomal protein uS10 family. In terms of assembly, part of the 30S ribosomal subunit.

Functionally, involved in the binding of tRNA to the ribosomes. The protein is Small ribosomal subunit protein uS10 of Nostoc punctiforme (strain ATCC 29133 / PCC 73102).